A 309-amino-acid polypeptide reads, in one-letter code: Ketosamine-3-kinase (309 aa).

At Ser-20 the chain carries Phosphoserine. ATP is bound at residue 89–91 (EHL). Asp-217 functions as the Proton acceptor in the catalytic mechanism.

It belongs to the fructosamine kinase family.

The catalysed reaction is N(6)-D-ribulosyl-L-lysyl-[protein] + ATP = N(6)-(3-O-phospho-D-ribulosyl)-L-lysyl-[protein] + ADP + H(+). The enzyme catalyses N(6)-(D-psicosyl)-L-lysyl-[protein] + ATP = N(6)-(3-O-phospho-D-psicosyl)-L-lysyl-[protein] + ADP + H(+). Its function is as follows. Ketosamine-3-kinase involved in protein deglycation by mediating phosphorylation of ribuloselysine and psicoselysine on glycated proteins, to generate ribuloselysine-3 phosphate and psicoselysine-3 phosphate, respectively. Ribuloselysine-3 phosphate and psicoselysine-3 phosphate adducts are unstable and decompose under physiological conditions. Not able to phosphorylate fructoselysine. This is Ketosamine-3-kinase from Mus musculus (Mouse).